The chain runs to 395 residues: Nuclear hormone receptor family member nhr-10 (395 aa).

Positions 15–90 form a DNA-binding region, nuclear receptor; sequence EEVCLVCSDI…VGMDRNAIQQ (76 aa). NR C4-type zinc fingers lie at residues 18–38 and 54–78; these read CLVCSDISTGYHYGVPSCNGC and CQFQGKCPVDKSIRCACRHCRFEKC. One can recognise an NR LBD domain in the interval 152-392; it reads PSRTLIEAVV…TFAKQLLFGI (241 aa).

This sequence belongs to the nuclear hormone receptor family.

The protein resides in the nucleus. Probable transcription factor that acts in a feed-forward loop with nhr-68 to activate genes involved in the vitamin B12-independent breakdown of the short-chain fatty acid propionate. This pathway is triggered in response to a diet low in vitamin B12, when canonical vitamin B12-dependent propionate breakdown cannot function; the resulting accumulation of propionate is probably sensed by nhr-10 and/or nhr-68. The chain is Nuclear hormone receptor family member nhr-10 (nhr-10) from Caenorhabditis elegans.